The primary structure comprises 189 residues: EFLFARTMIGVFKNIEYMCNRTSSKTWGKEAWKKIVVCIVSDGRAKINPRTRAVLAGLGVYQDGIAKQQVNGKDVTAHIYEYTTQVGLELKGTQGSLKPRSATPVQLLFCLKEKNQKKINSHRWFFQAFGRVLDPNICVLFDAGTKPGKDSIYQLWKAFDLEPMCGGACGEIKVMLDHGKKLYNPLIAT.

The protein belongs to the chitin synthase family. Class I subfamily.

It is found in the cell membrane. The catalysed reaction is [(1-&gt;4)-N-acetyl-beta-D-glucosaminyl](n) + UDP-N-acetyl-alpha-D-glucosamine = [(1-&gt;4)-N-acetyl-beta-D-glucosaminyl](n+1) + UDP + H(+). In terms of biological role, polymerizes chitin, a structural polymer of the cell wall and septum, by transferring the sugar moiety of UDP-GlcNAc to the non-reducing end of the growing chitin polymer. In Exophiala jeanselmei (Dematiaceous fungus), this protein is Chitin synthase 1 (CHS1).